Reading from the N-terminus, the 80-residue chain is Protein KorB (80 aa).

DNA-binding regions (H-T-H motif) lie at residues 13–32 and 56–75; these read AEAA…AELD and NEVT…AEAE.

In terms of biological role, repressor for the transcription of certain pIJ101 promoters, including those the from kilA and kilB loci. The polypeptide is Protein KorB (korB) (Streptomyces lividans).